Here is a 562-residue protein sequence, read N- to C-terminus: Adenylate kinase isoenzyme 5 (562 aa).

2 adenylate kinase regions span residues 133–316 (KIIL…MAVD) and 377–559 (KIIF…TAID). Residue 142-147 (GSGKGT) participates in ATP binding. The segment at 162-193 (SVGELLRKKIHSTSSNRKWSLIAKIITTGELA) is NMP 1. AMP is bound by residues Arg-168, 191 to 193 (ELA), 219 to 222 (GFPR), and Gln-226. The segment at 256-266 (KRAEQQGRPDD) is LID 1. Arg-257 contacts ATP. 2 residues coordinate AMP: Arg-263 and Arg-274. 386–391 (GSGKGT) provides a ligand contact to ATP. Residues 406 to 435 (STDELLQNELSSESGRSKLIRDIMERGELV) are NMP 2. Residues Thr-407, 433-435 (ELV), 462-465 (GYPR), and Gln-469 each bind AMP. The LID 2 stretch occupies residues 499–509 (QRSRNSPQADD). Arg-500 serves as a coordination point for ATP. Arg-517 is an AMP binding site. Gly-545 contributes to the ATP binding site.

It belongs to the adenylate kinase family. Monomer.

The protein resides in the cytoplasm. It catalyses the reaction AMP + ATP = 2 ADP. It carries out the reaction a 2'-deoxyribonucleoside 5'-diphosphate + ATP = a 2'-deoxyribonucleoside 5'-triphosphate + ADP. The enzyme catalyses a ribonucleoside 5'-diphosphate + ATP = a ribonucleoside 5'-triphosphate + ADP. Functionally, nucleoside monophosphate (NMP) kinase that catalyzes the reversible transfer of the terminal phosphate group between nucleoside triphosphates and monophosphates. Active on AMP and dAMP with ATP as a donor. When GTP is used as phosphate donor, the enzyme phosphorylates AMP, CMP, and to a small extent dCMP. Also displays broad nucleoside diphosphate kinase activity. The polypeptide is Adenylate kinase isoenzyme 5 (Ak5) (Bos taurus (Bovine)).